The following is a 944-amino-acid chain: Serine/threonine-protein kinase ATG1 (944 aa).

Positions 24–327 constitute a Protein kinase domain; the sequence is FNIGSEIGKG…FENFFTHQVV (304 aa). ATP contacts are provided by residues 30 to 38 and Lys53; that span reads IGKGSFAQV. Asp167 acts as the Proton acceptor in catalysis. Positions 344 to 423 are disordered; that stretch reads RQESRDPRSA…NSPREGGEGL (80 aa). Residues 356 to 367 are compositionally biased toward low complexity; that stretch reads SGSPSLSSRSPR. An LIR motif is present at residues 428 to 431; sequence PVAQ. Disordered regions lie at residues 443 to 475, 512 to 572, 777 to 801, 860 to 895, and 925 to 944; these read YDSV…PITE, LGDA…GSAS, QLPD…AGSP, EGSG…EEAH, and AVRR…HASS. Composition is skewed to polar residues over residues 447–459 and 516–549; these read TGRN…TSLL and SQRS…NALA. Over residues 563 to 572 the composition is skewed to low complexity; sequence SLSASPGSAS. The segment covering 785-801 has biased composition (polar residues); the sequence is HPSNHGTESIASSAGSP. Over residues 865 to 881 the composition is skewed to basic and acidic residues; it reads ETRRLSTGKEAEREAVK. Positions 924–930 are required for Cvt trafficking; the sequence is QAVRRRS.

Belongs to the protein kinase superfamily. Ser/Thr protein kinase family. APG1/unc-51/ULK1 subfamily. As to quaternary structure, homodimer. Dimerization requires the presence of ATG13. Forms a ternary complex with ATG13 and ATG17.

The protein resides in the cytoplasm. The protein localises to the preautophagosomal structure membrane. It catalyses the reaction L-seryl-[protein] + ATP = O-phospho-L-seryl-[protein] + ADP + H(+). It carries out the reaction L-threonyl-[protein] + ATP = O-phospho-L-threonyl-[protein] + ADP + H(+). Serine/threonine protein kinase involved in the cytoplasm to vacuole transport (Cvt) and found to be essential in autophagy, where it is required for the formation of autophagosomes. Involved in the clearance of protein aggregates which cannot be efficiently cleared by the proteasome. Required for selective autophagic degradation of the nucleus (nucleophagy) as well as for mitophagy which contributes to regulate mitochondrial quantity and quality by eliminating the mitochondria to a basal level to fulfill cellular energy requirements and preventing excess ROS production. Also involved in endoplasmic reticulum-specific autophagic process, in selective removal of ER-associated degradation (ERAD) substrates. Plays a key role in ATG9 and ATG23 cycling through the pre-autophagosomal structure and is necessary to promote ATG18 binding to ATG9 through phosphorylation of ATG9. Catalyzes phosphorylation of ATG4, decreasing the interaction between ATG4 and ATG8 and impairing deconjugation of PE-conjugated forms of ATG8. Autophagy is required for proper vegetative growth, asexual/sexual reproduction, and full virulence. Autophagy is particularly involved in the biosynthesis of deoxynivalenol (DON), an important virulence determinant. This Gibberella zeae (strain ATCC MYA-4620 / CBS 123657 / FGSC 9075 / NRRL 31084 / PH-1) (Wheat head blight fungus) protein is Serine/threonine-protein kinase ATG1.